The chain runs to 224 residues: tRNA (guanine-N(7)-)-methyltransferase (224 aa).

S-adenosyl-L-methionine contacts are provided by Glu56, Glu81, Asp108, and Asp131. Asp131 is an active-site residue. Residues Lys135, Asp167, and 202-205 each bind substrate; that span reads TKFE.

It belongs to the class I-like SAM-binding methyltransferase superfamily. TrmB family.

The enzyme catalyses guanosine(46) in tRNA + S-adenosyl-L-methionine = N(7)-methylguanosine(46) in tRNA + S-adenosyl-L-homocysteine. It participates in tRNA modification; N(7)-methylguanine-tRNA biosynthesis. Catalyzes the formation of N(7)-methylguanine at position 46 (m7G46) in tRNA. In Nitrosomonas eutropha (strain DSM 101675 / C91 / Nm57), this protein is tRNA (guanine-N(7)-)-methyltransferase.